The sequence spans 189 residues: Leucine repeat adapter protein 25 (189 aa).

A Phosphoserine modification is found at Ser-28. Residues 54 to 83 are disordered; sequence ELSRAARAPDGPRHAAGAANAGPAAGPRRP. Low complexity predominate over residues 67-83; the sequence is HAAGAANAGPAAGPRRP. The stretch at 86–114 is one LRR repeat; it reads LDSALAALRKEMVGLRQLDMSLLCQLWGL. Residues 141 to 175 are disordered; sequence DSSYPPDAGLSDDEEPPDASLPPDPPPLTVPQTHN. Positions 159–169 are enriched in pro residues; it reads ASLPPDPPPLT. Residue Ser-188 is modified to Phosphoserine.

Belongs to the FAM89 family. In terms of assembly, interacts with SKI. Interacts (via LRR repeat) with CDC42BPA (via AGC-kinase C-terminal domain), CDC42BPB (via AGC-kinase C-terminal domain) and LIMK1 (via LIM zinc-binding domains). Forms a tripartite complex with CDC42BPA, CDC42BPB and LIMK1.

The protein localises to the cytoplasm. It is found in the cell projection. Its subcellular location is the lamellipodium. Negatively regulates TGF-beta-induced signaling; in cooperation with SKI prevents the translocation of SMAD2 from the nucleus to the cytoplasm in response to TGF-beta. Acts as an adapter that mediates the specific recognition of LIMK1 by CDC42BPA and CDC42BPB in the lamellipodia. LRAP25-mediated CDC42BPA/CDC42BPB targeting to LIMK1 and the lamellipodium results in LIMK1 activation and the subsequent phosphorylation of CFL1 which is important for lamellipodial F-actin regulation. In Homo sapiens (Human), this protein is Leucine repeat adapter protein 25 (FAM89B).